A 235-amino-acid chain; its full sequence is Proteasome subunit alpha (235 aa).

This sequence belongs to the peptidase T1A family. As to quaternary structure, the 20S proteasome core is composed of 14 alpha and 14 beta subunits that assemble into four stacked heptameric rings, resulting in a barrel-shaped structure. The two inner rings, each composed of seven catalytic beta subunits, are sandwiched by two outer rings, each composed of seven alpha subunits. The catalytic chamber with the active sites is on the inside of the barrel. Has a gated structure, the ends of the cylinder being occluded by the N-termini of the alpha-subunits. Is capped by the proteasome-associated ATPase, ARC.

The protein localises to the cytoplasm. The protein operates within protein degradation; proteasomal Pup-dependent pathway. Its activity is regulated as follows. The formation of the proteasomal ATPase ARC-20S proteasome complex, likely via the docking of the C-termini of ARC into the intersubunit pockets in the alpha-rings, may trigger opening of the gate for substrate entry. Interconversion between the open-gate and close-gate conformations leads to a dynamic regulation of the 20S proteasome proteolysis activity. Component of the proteasome core, a large protease complex with broad specificity involved in protein degradation. The polypeptide is Proteasome subunit alpha (Paenarthrobacter aurescens (strain TC1)).